The chain runs to 530 residues: Tyrosinase (530 aa).

The N-terminal stretch at 1-18 is a signal peptide; the sequence is MLLAALCCLLWSFRTSTG. Residues 19 to 473 lie on the Lumenal, melanosome side of the membrane; the sequence is HFPRACASSK…IKPYLEQASR (455 aa). Residues N86, N111, and N161 are each glycosylated (N-linked (GlcNAc...) asparagine). H180, H202, and H211 together coordinate Cu cation. N230 and N337 each carry an N-linked (GlcNAc...) asparagine glycan. Residues H363 and H367 each coordinate Cu cation. The N-linked (GlcNAc...) asparagine glycan is linked to N371. A Cu cation-binding site is contributed by H390. The chain crosses the membrane as a helical span at residues 474 to 494; sequence IWPWLIGAAVVGCVVTAVLGG. Over 495–530 the chain is Cytoplasmic; that stretch reads LTSLLCRRNRKQLHEEKQPLLMEKEDYHSLLYQTHL.

It belongs to the tyrosinase family. Forms an OPN3-dependent complex with DCT in response to blue light in melanocytes. It depends on Cu(2+) as a cofactor. Glycosylated.

The protein localises to the melanosome membrane. It is found in the melanosome. It catalyses the reaction 2 L-dopa + O2 = 2 L-dopaquinone + 2 H2O. The catalysed reaction is L-tyrosine + O2 = L-dopaquinone + H2O. It carries out the reaction 2 5,6-dihydroxyindole-2-carboxylate + O2 = 2 indole-5,6-quinone-2-carboxylate + 2 H2O. In terms of biological role, this is a copper-containing oxidase that functions in the formation of pigments such as melanins and other polyphenolic compounds. Catalyzes the initial and rate limiting step in the cascade of reactions leading to melanin production from tyrosine. In addition to hydroxylating tyrosine to DOPA (3,4-dihydroxyphenylalanine), also catalyzes the oxidation of DOPA to DOPA-quinone, and possibly the oxidation of DHI (5,6-dihydroxyindole) to indole-5,6 quinone. This is Tyrosinase (TYR) from Canis lupus familiaris (Dog).